A 409-amino-acid polypeptide reads, in one-letter code: Single Ig IL-1-related receptor (409 aa).

At 1-117 (MAGVCDMAPN…TLWRAGPAGH (117 aa)) the chain is on the extracellular side. The region spanning 9–108 (PNFLSPSEDQ…VWNVSSHSFT (100 aa)) is the Ig-like C2-type domain. Residues N31, N58, N73, N85, and N101 are each glycosylated (N-linked (GlcNAc...) asparagine). C32 and C97 are disulfide-bonded. A helical; Signal-anchor for type III membrane protein transmembrane segment spans residues 118 to 138 (VAAVLASLLVLVVLLLVALLY). Residues 139–409 (VKCRLNMLLW…FYCLVSEDDV (271 aa)) lie on the Cytoplasmic side of the membrane. One can recognise a TIR domain in the interval 162 to 306 (KLYDAYVSYS…DFWKELQLAL (145 aa)). S382 is subject to Phosphoserine.

The protein belongs to the interleukin-1 receptor family. Interacts with IL1R1, IRAK1, TLR4, TLR5, TLR9 and TRAF6. Upon IL-1 stimulation found in a complex at least composed of IL1R1, SIGIRR, MYD88, IRAK1 and TRAF6. Upon stimulation with LPC found in a complex at least composed of TLR4, SIG1IR, MYD88, IRAK1 and TRAF6. Interacts with PALM3. As to expression, expressed at high levels in kidney, and at moderate levels in colon, small intestine, lung, spleen and liver. Not expressed in brain and muscle. Expressed at high levels in epithelial cells, at moderate levels in splenocytes, and at low or undetectable levels in fibroblasts or endothelial cells. Expressed in mucosal and dendritic cells.

The protein localises to the membrane. In terms of biological role, acts as a negative regulator of the Toll-like and IL-1R receptor signaling pathways. Attenuates the recruitment of receptor-proximal signaling components to the TLR4 receptor, probably through an TIR-TIR domain interaction with TLR4. Through its extracellular domain interferes with the heterodimerization of Il1R1 and IL1RAP. The sequence is that of Single Ig IL-1-related receptor (Sigirr) from Mus musculus (Mouse).